Here is a 664-residue protein sequence, read N- to C-terminus: Methionine--tRNA ligase (664 aa).

The 'HIGH' region signature appears at 13–23; the sequence is PYTNGPCHLGH. Zn(2+)-binding residues include Cys144, Cys147, Cys156, and Cys160. A 'KMSKS' region motif is present at residues 327-331; it reads KFSKS. Lys330 provides a ligand contact to ATP. In terms of domain architecture, tRNA-binding spans 566–664; that stretch reads EFAKVEMKTG…TPVPSGTKIR (99 aa).

The protein belongs to the class-I aminoacyl-tRNA synthetase family. MetG type 1 subfamily. In terms of assembly, homodimer. Zn(2+) is required as a cofactor.

It is found in the cytoplasm. The enzyme catalyses tRNA(Met) + L-methionine + ATP = L-methionyl-tRNA(Met) + AMP + diphosphate. Its function is as follows. Is required not only for elongation of protein synthesis but also for the initiation of all mRNA translation through initiator tRNA(fMet) aminoacylation. The sequence is that of Methionine--tRNA ligase from Methanospirillum hungatei JF-1 (strain ATCC 27890 / DSM 864 / NBRC 100397 / JF-1).